The chain runs to 212 residues: Adenylate kinase (212 aa).

10–15 (GAGKGT) serves as a coordination point for ATP. Residues 30 to 59 (STGDMFRAAMANQTEMGVLAKSYIDKGELV) are NMP. AMP contacts are provided by residues Thr31, Arg36, 57 to 59 (ELV), 86 to 89 (GYPR), and Gln93. Residues 127-159 (GRIIHRQTGETFHKVFNPPANYNEEDYYQREDD) form an LID region. ATP is bound by residues Arg128 and 137–138 (TF). 2 residues coordinate AMP: Arg156 and Arg167. ATP is bound at residue Gln195.

It belongs to the adenylate kinase family. In terms of assembly, monomer.

It localises to the cytoplasm. The enzyme catalyses AMP + ATP = 2 ADP. It functions in the pathway purine metabolism; AMP biosynthesis via salvage pathway; AMP from ADP: step 1/1. In terms of biological role, catalyzes the reversible transfer of the terminal phosphate group between ATP and AMP. Plays an important role in cellular energy homeostasis and in adenine nucleotide metabolism. This chain is Adenylate kinase, found in Streptococcus gordonii (strain Challis / ATCC 35105 / BCRC 15272 / CH1 / DL1 / V288).